We begin with the raw amino-acid sequence, 361 residues long: POU domain, class 3, transcription factor 4 (361 aa).

Disordered stretches follow at residues 99–131 and 144–192; these read PHVAHHSPHTNHPNAWGASPAPNSSITNSGQPL and MLEH…PTSD. The segment covering 119–131 has biased composition (polar residues); sequence APNSSITNSGQPL. A compositionally biased stretch (basic and acidic residues) spans 165–183; the sequence is VLREPPDHGELGSHHCQDH. Residues 186–260 enclose the POU-specific domain; that stretch reads EETPTSDELE…LLNKWLEEAD (75 aa). Residue S265 is modified to Phosphoserine. Residues 278-337 constitute a DNA-binding region (homeobox); the sequence is KRKKRTSIEVSVKGVLETHFLKCPKPAAQEISSLADSLQLEKEVVRVWFCNRRQKEKRMT. Residues 334–361 form a disordered region; the sequence is KRMTPPGDQQPHEVYSHTVKTDASCHDL. Over residues 343–361 the composition is skewed to basic and acidic residues; it reads QPHEVYSHTVKTDASCHDL.

Belongs to the POU transcription factor family. Class-3 subfamily.

It localises to the nucleus. Probable transcription factor which exert its primary action widely during early neural development and in a very limited set of neurons in the mature brain. The polypeptide is POU domain, class 3, transcription factor 4 (Pou3f4) (Mesocricetus auratus (Golden hamster)).